A 469-amino-acid chain; its full sequence is Putative multidrug resistance protein MdtD (469 aa).

The next 13 membrane-spanning stretches (helical) occupy residues 8 to 28 (LWIV…VNTA), 45 to 65 (SVIV…GWLA), 68 to 88 (VGVK…SLLC), 102 to 122 (VIQG…VMKI), 134 to 154 (FVTL…GFLV), 161 to 181 (WIFL…LWLM), 191 to 211 (FDIS…LALD), 215 to 235 (GLGL…LALA), 263 to 283 (LIGS…TPVF), 286 to 306 (IGLG…IIGS), 338 to 358 (LSFP…VLFF), 392 to 412 (MVMQ…LGVF), and 426 to 446 (SAFL…ALIF).

It belongs to the major facilitator superfamily. TCR/Tet family.

Its subcellular location is the cell inner membrane. The protein is Putative multidrug resistance protein MdtD of Yersinia enterocolitica serotype O:8 / biotype 1B (strain NCTC 13174 / 8081).